A 156-amino-acid chain; its full sequence is uncharacterized protein (156 aa).

5 helical membrane-spanning segments follow: residues 6-26 (LIVL…PYFA), 34-54 (FWKF…HQMP), 68-88 (CARC…YPFI), 100-120 (WYLI…LIGL), and 129-149 (FITG…IFFE).

The protein localises to the cell membrane. This is an uncharacterized protein from Methanocaldococcus jannaschii (strain ATCC 43067 / DSM 2661 / JAL-1 / JCM 10045 / NBRC 100440) (Methanococcus jannaschii).